The primary structure comprises 492 residues: Catalase (492 aa).

Residues His65 and Asn138 contribute to the active site. Tyr348 provides a ligand contact to heme.

It belongs to the catalase family. Homotetramer. Heme serves as cofactor.

Its subcellular location is the cytoplasm. The protein resides in the cytosol. It is found in the peroxisome matrix. The catalysed reaction is 2 H2O2 = O2 + 2 H2O. In terms of biological role, catalyzes the degradation of hydrogen peroxide (H(2)O(2)) generated by peroxisomal oxidases to water and oxygen, thereby protecting cells from the toxic effects of hydrogen peroxide. The sequence is that of Catalase from Soldanella alpina (Alpine snowbell).